Reading from the N-terminus, the 233-residue chain is 5'-methylthioadenosine/S-adenosylhomocysteine nucleosidase (233 aa).

Glu12 functions as the Proton acceptor in the catalytic mechanism. Residues Gly78, Ile156, and 177–178 contribute to the substrate site; that span reads ME. Catalysis depends on Asp201, which acts as the Proton donor.

It belongs to the PNP/UDP phosphorylase family. MtnN subfamily.

It carries out the reaction S-adenosyl-L-homocysteine + H2O = S-(5-deoxy-D-ribos-5-yl)-L-homocysteine + adenine. The enzyme catalyses S-methyl-5'-thioadenosine + H2O = 5-(methylsulfanyl)-D-ribose + adenine. It catalyses the reaction 5'-deoxyadenosine + H2O = 5-deoxy-D-ribose + adenine. The protein operates within amino-acid biosynthesis; L-methionine biosynthesis via salvage pathway; S-methyl-5-thio-alpha-D-ribose 1-phosphate from S-methyl-5'-thioadenosine (hydrolase route): step 1/2. In terms of biological role, catalyzes the irreversible cleavage of the glycosidic bond in both 5'-methylthioadenosine (MTA) and S-adenosylhomocysteine (SAH/AdoHcy) to adenine and the corresponding thioribose, 5'-methylthioribose and S-ribosylhomocysteine, respectively. Also cleaves 5'-deoxyadenosine, a toxic by-product of radical S-adenosylmethionine (SAM) enzymes, into 5-deoxyribose and adenine. The polypeptide is 5'-methylthioadenosine/S-adenosylhomocysteine nucleosidase (Listeria monocytogenes serotype 4b (strain CLIP80459)).